The sequence spans 213 residues: ATP phosphoribosyltransferase (213 aa).

It belongs to the ATP phosphoribosyltransferase family. Short subfamily. In terms of assembly, heteromultimer composed of HisG and HisZ subunits.

The protein resides in the cytoplasm. It catalyses the reaction 1-(5-phospho-beta-D-ribosyl)-ATP + diphosphate = 5-phospho-alpha-D-ribose 1-diphosphate + ATP. Its pathway is amino-acid biosynthesis; L-histidine biosynthesis; L-histidine from 5-phospho-alpha-D-ribose 1-diphosphate: step 1/9. In terms of biological role, catalyzes the condensation of ATP and 5-phosphoribose 1-diphosphate to form N'-(5'-phosphoribosyl)-ATP (PR-ATP). Has a crucial role in the pathway because the rate of histidine biosynthesis seems to be controlled primarily by regulation of HisG enzymatic activity. This is ATP phosphoribosyltransferase from Chromobacterium violaceum (strain ATCC 12472 / DSM 30191 / JCM 1249 / CCUG 213 / NBRC 12614 / NCIMB 9131 / NCTC 9757 / MK).